We begin with the raw amino-acid sequence, 268 residues long: MTLKARVIPCLDVKDGRVVKGVQFVDLIDAGDPVEAATAYDAAGADELCFLDITASHENRETIFDVIARTAEQCFMPLTVGGGVRQIPDIRRLLLAGADKVSINTAAVKEPEFVARAADKFGDQCIVVAIDAKKVSPPGQADRWEIFTHGGRNPTGIDAVEFARRVVDLGAGEILLTSMDRDGTKAGYDIALTQAVADAVRAPVIASGGVGTLDHLVEGIRDGHATAVLAASIFHFGTYTVAEAKRYMADAGIPMRLDAANAEGNAHE.

Active-site residues include Asp12 and Asp131.

The protein belongs to the HisA/HisF family. Heterodimer of HisH and HisF.

Its subcellular location is the cytoplasm. It carries out the reaction 5-[(5-phospho-1-deoxy-D-ribulos-1-ylimino)methylamino]-1-(5-phospho-beta-D-ribosyl)imidazole-4-carboxamide + L-glutamine = D-erythro-1-(imidazol-4-yl)glycerol 3-phosphate + 5-amino-1-(5-phospho-beta-D-ribosyl)imidazole-4-carboxamide + L-glutamate + H(+). It participates in amino-acid biosynthesis; L-histidine biosynthesis; L-histidine from 5-phospho-alpha-D-ribose 1-diphosphate: step 5/9. Functionally, IGPS catalyzes the conversion of PRFAR and glutamine to IGP, AICAR and glutamate. The HisF subunit catalyzes the cyclization activity that produces IGP and AICAR from PRFAR using the ammonia provided by the HisH subunit. This chain is Imidazole glycerol phosphate synthase subunit HisF, found in Chelativorans sp. (strain BNC1).